Reading from the N-terminus, the 862-residue chain is Leucine--tRNA ligase (862 aa).

A 'HIGH' region motif is present at residues 42–52; the sequence is PYPSGRLHMGH. The 'KMSKS' region signature appears at 622 to 626; sequence KMSKS. Residue Lys625 coordinates ATP.

The protein belongs to the class-I aminoacyl-tRNA synthetase family.

It is found in the cytoplasm. The catalysed reaction is tRNA(Leu) + L-leucine + ATP = L-leucyl-tRNA(Leu) + AMP + diphosphate. The protein is Leucine--tRNA ligase of Vibrio campbellii (strain ATCC BAA-1116).